Reading from the N-terminus, the 121-residue chain is ATP synthase epsilon chain (121 aa).

This sequence belongs to the ATPase epsilon chain family. In terms of assembly, F-type ATPases have 2 components, CF(1) - the catalytic core - and CF(0) - the membrane proton channel. CF(1) has five subunits: alpha(3), beta(3), gamma(1), delta(1), epsilon(1). CF(0) has three main subunits: a, b and c.

The protein localises to the cell membrane. Its function is as follows. Produces ATP from ADP in the presence of a proton gradient across the membrane. The sequence is that of ATP synthase epsilon chain from Mycolicibacterium smegmatis (strain ATCC 700084 / mc(2)155) (Mycobacterium smegmatis).